The primary structure comprises 467 residues: Zinc finger and BTB domain-containing protein 43 (467 aa).

Met1 is subject to N-acetylmethionine. The 65-residue stretch at 33–97 folds into the BTB domain; that stretch reads CDVSIVVQGH…SYTGRLVMPA (65 aa). 2 disordered regions span residues 134–153 and 162–225; these read LNHG…GLVE and HTDF…SAEF. Composition is skewed to basic and acidic residues over residues 164–174 and 182–194; these read DFPKAQELRDG and KDEL…EHEY. Residues Lys182, Lys241, Lys247, Lys297, and Lys358 each participate in a glycyl lysine isopeptide (Lys-Gly) (interchain with G-Cter in SUMO2) cross-link. The segment at 373 to 394 adopts a C2H2-type 1; atypical zinc-finger fold; it reads YPCQCGKSFTHKSQRDRHMSMH. The C2H2-type 2 zinc finger occupies 400–422; the sequence is YGCGVCGKKFKMKHHLVGHMKIH. Thr423 is subject to Phosphothreonine. Residues 428-450 form a C2H2-type 3; atypical zinc finger; sequence YECNICAKRFMWRDSFHRHVTSC. Lys458 is covalently cross-linked (Glycyl lysine isopeptide (Lys-Gly) (interchain with G-Cter in SUMO2)).

This sequence belongs to the krueppel C2H2-type zinc-finger protein family. Interacts with BDP1.

Its subcellular location is the nucleus. In terms of biological role, may be involved in transcriptional regulation. This chain is Zinc finger and BTB domain-containing protein 43 (ZBTB43), found in Homo sapiens (Human).